Here is a 430-residue protein sequence, read N- to C-terminus: Replication protein A 32 kDa subunit C (430 aa).

The interval 14 to 46 is disordered; it reads MPSQRSGAPAPEYSAAGTGAAAAPSPSKPRDPR. Over residues 23–38 the composition is skewed to low complexity; sequence APEYSAAGTGAAAAPS. Residues 86–160 constitute a DNA-binding region (OB); sequence VRVLGRVVSV…QGLARSIRPI (75 aa).

Belongs to the replication factor A protein 2 family. Heterotrimer of RPA1, RPA2 and RPA3 (canonical replication protein A complex). Interacts with RPA1C and RPA3. Post-translationally, phosphorylated in a cell-cycle-dependent manner (from the S phase until mitosis). In response to DNA damage, recruited to DNA-repair nuclear foci, as a hypophosphorylated form.

It is found in the nucleus. Functionally, component of the replication protein A complex (RPA) required for DNA recombination, repair and replication. The activity of RPA is mediated by single-stranded DNA binding and protein interactions. This Oryza sativa subsp. japonica (Rice) protein is Replication protein A 32 kDa subunit C (RPA2C).